The following is a 217-amino-acid chain: Thiamine-phosphate synthase (217 aa).

Residues 42 to 46 (QYRDK) and Asp77 each bind 4-amino-2-methyl-5-(diphosphooxymethyl)pyrimidine. The Mg(2+) site is built by Asp78 and Asp97. Ser116 lines the 4-amino-2-methyl-5-(diphosphooxymethyl)pyrimidine pocket. 143-145 (TTS) lines the 2-[(2R,5Z)-2-carboxy-4-methylthiazol-5(2H)-ylidene]ethyl phosphate pocket. Lys146 contributes to the 4-amino-2-methyl-5-(diphosphooxymethyl)pyrimidine binding site. Residues Gly174 and 194 to 195 (IS) contribute to the 2-[(2R,5Z)-2-carboxy-4-methylthiazol-5(2H)-ylidene]ethyl phosphate site.

Belongs to the thiamine-phosphate synthase family. Mg(2+) is required as a cofactor.

The catalysed reaction is 2-[(2R,5Z)-2-carboxy-4-methylthiazol-5(2H)-ylidene]ethyl phosphate + 4-amino-2-methyl-5-(diphosphooxymethyl)pyrimidine + 2 H(+) = thiamine phosphate + CO2 + diphosphate. It catalyses the reaction 2-(2-carboxy-4-methylthiazol-5-yl)ethyl phosphate + 4-amino-2-methyl-5-(diphosphooxymethyl)pyrimidine + 2 H(+) = thiamine phosphate + CO2 + diphosphate. The enzyme catalyses 4-methyl-5-(2-phosphooxyethyl)-thiazole + 4-amino-2-methyl-5-(diphosphooxymethyl)pyrimidine + H(+) = thiamine phosphate + diphosphate. It participates in cofactor biosynthesis; thiamine diphosphate biosynthesis; thiamine phosphate from 4-amino-2-methyl-5-diphosphomethylpyrimidine and 4-methyl-5-(2-phosphoethyl)-thiazole: step 1/1. Its function is as follows. Condenses 4-methyl-5-(beta-hydroxyethyl)thiazole monophosphate (THZ-P) and 2-methyl-4-amino-5-hydroxymethyl pyrimidine pyrophosphate (HMP-PP) to form thiamine monophosphate (TMP). This Lactiplantibacillus plantarum (strain ATCC BAA-793 / NCIMB 8826 / WCFS1) (Lactobacillus plantarum) protein is Thiamine-phosphate synthase.